The following is a 173-amino-acid chain: Alpha-crystallin A chain (173 aa).

N-acetylmethionine is present on methionine 1. Residues 52-164 (LFRSVLESGI…SDRPIPVARE (113 aa)) enclose the sHSP domain. Residues histidine 100, glutamate 102, histidine 107, and histidine 154 each contribute to the Zn(2+) site. The disordered stretch occupies residues 152 to 173 (TIHSDRPIPVAREEKPTSAPSS). Basic and acidic residues predominate over residues 153-167 (IHSDRPIPVAREEKP).

This sequence belongs to the small heat shock protein (HSP20) family. Heteropolymer composed of three CRYAA and one CRYAB subunits. Inter-subunit bridging via zinc ions enhances stability, which is crucial as there is no protein turn over in the lens. Can also form homodimers and homotetramers (dimers of dimers) which serve as the building blocks of homooligomers. Within homooligomers, the zinc-binding motif is created from residues of 3 different molecules. His-100 and Glu-102 from one molecule are ligands of the zinc ion, and His-107 and His-154 residues from additional molecules complete the site with tetrahedral coordination geometry.

It localises to the cytoplasm. The protein resides in the nucleus. In terms of biological role, contributes to the transparency and refractive index of the lens. May act as a chaperone, preventing aggregation of various proteins under a wide range of stress conditions. In Alligator mississippiensis (American alligator), this protein is Alpha-crystallin A chain (CRYAA).